Reading from the N-terminus, the 150-residue chain is Large ribosomal subunit protein bL9 (150 aa).

It belongs to the bacterial ribosomal protein bL9 family.

Functionally, binds to the 23S rRNA. This Streptococcus agalactiae serotype Ia (strain ATCC 27591 / A909 / CDC SS700) protein is Large ribosomal subunit protein bL9.